Here is a 151-residue protein sequence, read N- to C-terminus: HTH-type transcriptional regulator FL11 (151 aa).

The region spanning 5 to 66 (LDEIDKKIIK…IIDPEALGYS (62 aa)) is the HTH asnC-type domain. A DNA-binding region (H-T-H motif) is located at residues 24-43 (LREISKITGLAESTIHERIR). 98-104 (ETTGDYD) is an L-arginine binding site. Residues N118, D122, and 133–135 (THT) each bind L-lysine. Residues D122 and 133–135 (THT) each bind L-arginine.

Homodimer. Binds DNA as a dimer and an octamer. The octamer formed with lysine is stable in solution, but the octamer formed with arginine is unstable without DNA. When crystallized in the absence of DNA, dimers are assembled into helical cylinders with six dimers per turn. In solution, predominantly behaves as a dimer.

Its activity is regulated as follows. In the famine mode, FL11 forms dimers and acts as a repressor, leading to growth arrest. In the feast mode, in the presence of high concentrations of lysine or arginine, four dimers assemble into an octamer and cover the fl11 and lysine biosynthesis promoters. This leads to the inhibition of fl11 expression and lysine biosynthesis, decrease of the FL11 concentration in the cell, derepression of the target genes and activation of the metabolism. In terms of biological role, DNA-binding protein involved in the repression of transcription of a large number of genes, thereby arresting growth, in response to environmental changes. Binding sites are identified in promoters of approximately 200 transcription units, including genes involved in ATP synthesis, transmembrane transport, translation and DNA synthesis. In Pyrococcus horikoshii (strain ATCC 700860 / DSM 12428 / JCM 9974 / NBRC 100139 / OT-3), this protein is HTH-type transcriptional regulator FL11.